The chain runs to 153 residues: MNRVTAIISALVICIIVCLSWAVNHYRDNAITYKAQRDKNARELTLANRVITDIQMRQRDVAALDAKYTKELADAKAENDALRDDVAAGRRRLHIKAVCQSVREATTASGVDNAASPRLADTAERDYFTLRERLITMQKQLEGTQKYINEQCR.

Over 1–3 the chain is Cytoplasmic; the sequence is MNR. The chain crosses the membrane as a helical; Signal-anchor for type II membrane protein span at residues 4 to 24; the sequence is VTAIISALVICIIVCLSWAVN. Over 25–153 the chain is Periplasmic; that stretch reads HYRDNAITYK…TQKYINEQCR (129 aa). The stretch at 65–92 forms a coiled coil; the sequence is DAKYTKELADAKAENDALRDDVAAGRRR.

It belongs to the Lambdavirus i-spanin family. Homodimer; disulfide-linked. Interacts (via C-terminus) with the spanin outer lipoprotein subunit (via C-terminus). Part of the spanin complex which spans the entire periplasmic space. The spanin complex is composed of one homodimer of the i-spanin linked by intermolecular disulfide bonds involving two Cys residues and one homodimer of the o-spanin covalently linked by an intermolecular disulfide bond involving one Cys.

The protein resides in the host cell inner membrane. Component of the spanin complex that disrupts the host outer membrane and participates in cell lysis during virus exit. The spanin complex conducts the final step in host lysis by disrupting the outer membrane after holin and endolysin have permeabilized the inner membrane and degraded the host peptidoglycans. Host outer membrane disruption is due to local fusion between the inner and outer membrane performed by the spanin complex. The chain is Spanin, inner membrane subunit (Rz) from Escherichia coli (Bacteriophage 21).